A 252-amino-acid chain; its full sequence is Iron-sulfur cluster co-chaperone protein HscB homolog (252 aa).

A mitochondrion-targeting transit peptide spans 1–59 (MKKTKTMVASISTLIRRTYPSTNQCNSLATIQSQTQLPRESLQHHSSAEGRLRFSGRVF). In terms of domain architecture, J spans 93-165 (DYFQIFGLEK…LSRAMYIMKL (73 aa)).

The protein belongs to the HscB family. Interacts with ISU1 and HSP70-9/HSCA1.

It localises to the mitochondrion. The protein resides in the cytoplasm. The protein localises to the cytosol. Co-chaperone required for the assembly of iron-sulfur [Fe-S] clusters in both mitochondria and cytosol. Required for the activity of iron-sulfur proteins such as aconitase and succinate dehydrogenase. Involved in iron homeostasis and may take part in the control of iron translocation from roots to shoots. This is Iron-sulfur cluster co-chaperone protein HscB homolog from Arabidopsis thaliana (Mouse-ear cress).